Reading from the N-terminus, the 390-residue chain is Putative glutamate--cysteine ligase 2 (390 aa).

It belongs to the glutamate--cysteine ligase type 2 family. YbdK subfamily.

The catalysed reaction is L-cysteine + L-glutamate + ATP = gamma-L-glutamyl-L-cysteine + ADP + phosphate + H(+). In terms of biological role, ATP-dependent carboxylate-amine ligase which exhibits weak glutamate--cysteine ligase activity. In Chloroflexus aurantiacus (strain ATCC 29366 / DSM 635 / J-10-fl), this protein is Putative glutamate--cysteine ligase 2.